We begin with the raw amino-acid sequence, 609 residues long: Replication protein A 70 kDa DNA-binding subunit (609 aa).

A disordered region spans residues 113 to 163; it reads GNPQPYNDGQPQPAAPAPASAPAPAPSKLQNNSAPPPSMNRGTSKLFGGGS. Pro residues predominate over residues 125–137; sequence PAAPAPASAPAPA. The segment at residues 188–272 is a DNA-binding region (OB); sequence WTVRARVTNK…VKNDYEMTFN (85 aa). A C4-type zinc finger spans residues 472–494; that stretch reads CPSQDCNKKVIDQQNGLFRCEKC.

Belongs to the replication factor A protein 1 family. As to quaternary structure, component of the heterotrimeric canonical replication protein A complex (RPA). Interacts with rpain-a.

Its subcellular location is the nucleus. The protein resides in the PML body. As part of the heterotrimeric replication protein A complex (RPA/RP-A), binds and stabilizes single-stranded DNA intermediates, that form during DNA replication or upon DNA stress. It prevents their reannealing and in parallel, recruits and activates different proteins and complexes involved in DNA metabolism. Thereby, it plays an essential role both in DNA replication and the cellular response to DNA damage. The sequence is that of Replication protein A 70 kDa DNA-binding subunit (rpa1) from Xenopus laevis (African clawed frog).